The following is a 67-amino-acid chain: Protein DsrB (67 aa).

The protein belongs to the DsrB family.

This is Protein DsrB from Pectobacterium carotovorum subsp. carotovorum (strain PC1).